Reading from the N-terminus, the 223-residue chain is Pyridoxal phosphate homeostasis protein (223 aa).

An N6-(pyridoxal phosphate)lysine modification is found at Lys-36.

This sequence belongs to the pyridoxal phosphate-binding protein YggS/PROSC family. Monomer.

Functionally, pyridoxal 5'-phosphate (PLP)-binding protein, which is involved in PLP homeostasis. The protein is Pyridoxal phosphate homeostasis protein of Buchnera aphidicola subsp. Baizongia pistaciae (strain Bp).